The following is a 470-amino-acid chain: Pyruvate kinase I (470 aa).

Arg-32 provides a ligand contact to substrate. 4 residues coordinate K(+): Asn-34, Ser-36, Asp-66, and Thr-67. 34 to 37 provides a ligand contact to ATP; the sequence is NFSH. The ATP site is built by Arg-73 and Lys-156. Glu-222 provides a ligand contact to Mg(2+). Substrate contacts are provided by Gly-245, Asp-246, and Thr-278. Asp-246 provides a ligand contact to Mg(2+).

The protein belongs to the pyruvate kinase family. Homotetramer. Requires Mg(2+) as cofactor. It depends on K(+) as a cofactor.

It catalyses the reaction pyruvate + ATP = phosphoenolpyruvate + ADP + H(+). It functions in the pathway carbohydrate degradation; glycolysis; pyruvate from D-glyceraldehyde 3-phosphate: step 5/5. The chain is Pyruvate kinase I (pykF) from Salmonella typhi.